We begin with the raw amino-acid sequence, 44 residues long: Large ribosomal subunit protein bL34 (44 aa).

Residues 21–44 (RMDTSGGRRILSARRRKGRKTISA) are disordered. Positions 31-44 (LSARRRKGRKTISA) are enriched in basic residues.

Belongs to the bacterial ribosomal protein bL34 family.

This is Large ribosomal subunit protein bL34 from Endomicrobium trichonymphae.